A 903-amino-acid polypeptide reads, in one-letter code: Valine--tRNA ligase (903 aa).

A compositionally biased stretch (polar residues) spans 1 to 15 (MVCVTDQNNENPSQN). The segment at 1 to 22 (MVCVTDQNNENPSQNRADKLPK) is disordered. A 'HIGH' region motif is present at residues 61–71 (PNVTGQLHMGH). The 'KMSKS' region motif lies at 552 to 556 (KMSKS). Lys-555 is an ATP binding site. A coiled-coil region spans residues 836-902 (TVDVAAERKR…ERITKRLEEL (67 aa)).

This sequence belongs to the class-I aminoacyl-tRNA synthetase family. ValS type 1 subfamily. As to quaternary structure, monomer.

It is found in the cytoplasm. It catalyses the reaction tRNA(Val) + L-valine + ATP = L-valyl-tRNA(Val) + AMP + diphosphate. Functionally, catalyzes the attachment of valine to tRNA(Val). As ValRS can inadvertently accommodate and process structurally similar amino acids such as threonine, to avoid such errors, it has a 'posttransfer' editing activity that hydrolyzes mischarged Thr-tRNA(Val) in a tRNA-dependent manner. The polypeptide is Valine--tRNA ligase (Corynebacterium efficiens (strain DSM 44549 / YS-314 / AJ 12310 / JCM 11189 / NBRC 100395)).